Here is an 892-residue protein sequence, read N- to C-terminus: Translation initiation factor IF-2 (892 aa).

The interval 88–305 is disordered; that stretch reads KKRTFVKRDP…SLQQGFQKPA (218 aa). Composition is skewed to basic and acidic residues over residues 93–159 and 166–216; these read VKRD…KDKV and DMTK…EENK. A compositionally biased stretch (basic residues) spans 254–269; sequence GRGRNAKAARPAKKGK. Basic and acidic residues predominate over residues 270–282; that stretch reads HAESKADREEARA. One can recognise a tr-type G domain in the interval 391-560; sequence PRAPVVTIMG…LLQAEVLELK (170 aa). A G1 region spans residues 400 to 407; it reads GHVDHGKT. 400 to 407 contributes to the GTP binding site; that stretch reads GHVDHGKT. The tract at residues 425–429 is G2; sequence GITQH. The tract at residues 446–449 is G3; the sequence is DTPG. Residues 446-450 and 500-503 contribute to the GTP site; these read DTPGH and NKID. The tract at residues 500–503 is G4; sequence NKID. Residues 536–538 are G5; sequence SAK.

This sequence belongs to the TRAFAC class translation factor GTPase superfamily. Classic translation factor GTPase family. IF-2 subfamily.

It is found in the cytoplasm. In terms of biological role, one of the essential components for the initiation of protein synthesis. Protects formylmethionyl-tRNA from spontaneous hydrolysis and promotes its binding to the 30S ribosomal subunits. Also involved in the hydrolysis of GTP during the formation of the 70S ribosomal complex. This is Translation initiation factor IF-2 from Salmonella paratyphi A (strain ATCC 9150 / SARB42).